A 348-amino-acid polypeptide reads, in one-letter code: Phosphoribosylformylglycinamidine cyclo-ligase (348 aa).

Belongs to the AIR synthase family.

The protein localises to the cytoplasm. It carries out the reaction 2-formamido-N(1)-(5-O-phospho-beta-D-ribosyl)acetamidine + ATP = 5-amino-1-(5-phospho-beta-D-ribosyl)imidazole + ADP + phosphate + H(+). The protein operates within purine metabolism; IMP biosynthesis via de novo pathway; 5-amino-1-(5-phospho-D-ribosyl)imidazole from N(2)-formyl-N(1)-(5-phospho-D-ribosyl)glycinamide: step 2/2. The polypeptide is Phosphoribosylformylglycinamidine cyclo-ligase (Cereibacter sphaeroides (strain ATCC 17023 / DSM 158 / JCM 6121 / CCUG 31486 / LMG 2827 / NBRC 12203 / NCIMB 8253 / ATH 2.4.1.) (Rhodobacter sphaeroides)).